Reading from the N-terminus, the 429-residue chain is 3-phosphoshikimate 1-carboxyvinyltransferase (429 aa).

The 3-phosphoshikimate site is built by Lys11, Ser12, and Arg16. Position 11 (Lys11) interacts with phosphoenolpyruvate. Phosphoenolpyruvate contacts are provided by Gly82 and Arg110. Residues Ser155, Gln157, Asp302, and Lys329 each contribute to the 3-phosphoshikimate site. Gln157 provides a ligand contact to phosphoenolpyruvate. Asp302 functions as the Proton acceptor in the catalytic mechanism. Phosphoenolpyruvate-binding residues include Arg333 and Arg385.

It belongs to the EPSP synthase family. Monomer.

The protein localises to the cytoplasm. The catalysed reaction is 3-phosphoshikimate + phosphoenolpyruvate = 5-O-(1-carboxyvinyl)-3-phosphoshikimate + phosphate. Its pathway is metabolic intermediate biosynthesis; chorismate biosynthesis; chorismate from D-erythrose 4-phosphate and phosphoenolpyruvate: step 6/7. Its function is as follows. Catalyzes the transfer of the enolpyruvyl moiety of phosphoenolpyruvate (PEP) to the 5-hydroxyl of shikimate-3-phosphate (S3P) to produce enolpyruvyl shikimate-3-phosphate and inorganic phosphate. This is 3-phosphoshikimate 1-carboxyvinyltransferase from Helicobacter acinonychis (strain Sheeba).